The following is a 251-amino-acid chain: Mlc titration factor A (251 aa).

4 residues coordinate Zn(2+): His-111, His-148, His-152, and Glu-211.

This sequence belongs to the MtfA family. In terms of assembly, interacts with Mlc. Zn(2+) serves as cofactor.

Its subcellular location is the cytoplasm. In terms of biological role, involved in the modulation of the activity of the glucose-phosphotransferase system (glucose-PTS). Interacts with the transcriptional repressor Mlc, preventing its interaction with DNA and leading to the modulation of expression of genes regulated by Mlc, including ptsG, which encodes the PTS system glucose-specific EIICB component. Shows zinc-dependent metallopeptidase activity. The polypeptide is Mlc titration factor A (Salmonella arizonae (strain ATCC BAA-731 / CDC346-86 / RSK2980)).